The chain runs to 461 residues: Porin AaxA (461 aa).

Residues 1-22 (MSFRSVLLTALLSLSFTTTMQA) form the signal peptide.

This sequence belongs to the OprB family.

The protein localises to the cell outer membrane. Its function is as follows. Facilitates L-arginine uptake, as part of the AaxABC system. The arginine uptake by the bacterium in the macrophage may be a virulence factor against the host innate immune response. The sequence is that of Porin AaxA (aaxA) from Chlamydia trachomatis serovar D (strain ATCC VR-885 / DSM 19411 / UW-3/Cx).